The chain runs to 301 residues: MASVTYIDDSGSEVIDPPKTEVLDVTELAGDPVPHSPKPNVVVSSSVRELLECPVCLSAMYPPIHQCSNGHTLCSGCKPRVHNRCPTCRHELGNIRCLALEKVAASLELPCKYQNFGCVGIYPYYCKLKHESQCQYRPYSCPYAGSECTVAGDIPYLVNHLKDDHKVDMHNGCTFNHRYVKSNPHEVENATWMLTVFSCFGQYFCLHFEAFQLGMAPVYIAFLRFMGDDLEAKNYSYSLEVGGTGRKMIWQGVPRSIRDSHRKVRDSYDGLIIQRNMALFFSGGERKELKLRVTGRIWKEQ.

The segment at 53 to 89 (CPVCLSAMYPPIHQCSNGHTLCSGCKPRVHNRCPTCR) adopts an RING-type; degenerate zinc-finger fold. Residues 106–166 (SLELPCKYQN…LVNHLKDDHK (61 aa)) form an SIAH-type; degenerate zinc finger.

The protein belongs to the SINA (Seven in absentia) family. In terms of assembly, homodimer. Interacts with NEK6. Interacts with SKIPA.

The protein localises to the nucleus. It is found in the cytoplasm. The catalysed reaction is S-ubiquitinyl-[E2 ubiquitin-conjugating enzyme]-L-cysteine + [acceptor protein]-L-lysine = [E2 ubiquitin-conjugating enzyme]-L-cysteine + N(6)-ubiquitinyl-[acceptor protein]-L-lysine.. It functions in the pathway protein modification; protein ubiquitination. In terms of biological role, E3 ubiquitin-protein ligase that mediates ubiquitination and subsequent proteasomal degradation of target proteins. E3 ubiquitin ligases accept ubiquitin from an E2 ubiquitin-conjugating enzyme in the form of a thioester and then directly transfers the ubiquitin to targeted substrates. Plays a negative role in drought stress tolerance through transcriptional and post-translational regulation of diverse stress-related genes. Interacts with the serine/threonine-protein kinase NEK6 and promotes its degradation via the 26S proteasome-dependent pathway. The polypeptide is E3 ubiquitin-protein ligase DIS1 (Oryza sativa subsp. japonica (Rice)).